The chain runs to 402 residues: Probable peptidoglycan glycosyltransferase FtsW (402 aa).

Residues 1 to 24 are Cytoplasmic-facing; sequence MLYRLKLLLSGQNTKKERVRAKLE. A helical transmembrane segment spans residues 25 to 45; sequence IDISIVFVMLGLLIFGWVMVT. The Periplasmic portion of the chain corresponds to 46–63; sequence SASMVVALDDYNNPYFYS. A helical membrane pass occupies residues 64-84; sequence IRQGFFAVIAIFLFLLALLVP. Over 85–91 the chain is Cytoplasmic; the sequence is TKNYEKN. Residues 92-112 form a helical membrane-spanning segment; the sequence is YNAFFFIMLIVLVAVLVPGVG. Topologically, residues 113–121 are periplasmic; the sequence is KSVNGARRW. A helical membrane pass occupies residues 122–142; sequence IPLIIINIQVAELAKLLAIIF. The Cytoplasmic portion of the chain corresponds to 143–160; the sequence is FSGYIAENLPKMTNFKEG. Transmembrane regions (helical) follow at residues 161-181 and 182-202; these read ILTP…QPDF and GSTV…GNKV. A topological domain (cytoplasmic) is located at residue Arg203. The helical transmembrane segment at 204-224 threads the bilayer; sequence WYGLLIGAMLIMATMLVIISP. At 225–284 the chain is on the periplasmic side; that stretch reads YRMHRITGFLHPWENANGSGYQLVQALIGFGRGGWFGDGLGNGVQKQFFLPEAHTDFITS. The chain crosses the membrane as a helical span at residues 285–305; that stretch reads VIAEEIGVIGLMILLMVYLFI. The Cytoplasmic portion of the chain corresponds to 306–324; it reads VFRAMNIAKMAFELKRYYQ. A helical membrane pass occupies residues 325–345; sequence AFLSYGISFWIGFQVFVNIGV. Topologically, residues 346 to 357 are periplasmic; the sequence is NTGLLPTKGLTL. Residues 358-378 traverse the membrane as a helical segment; it reads PLISYGGSSLLIMCFTLGILV. At 379–402 the chain is on the cytoplasmic side; it reads RVDFENKLLADTINPKYIYKKVRK.

It belongs to the SEDS family. FtsW subfamily.

It localises to the cell inner membrane. It carries out the reaction [GlcNAc-(1-&gt;4)-Mur2Ac(oyl-L-Ala-gamma-D-Glu-L-Lys-D-Ala-D-Ala)](n)-di-trans,octa-cis-undecaprenyl diphosphate + beta-D-GlcNAc-(1-&gt;4)-Mur2Ac(oyl-L-Ala-gamma-D-Glu-L-Lys-D-Ala-D-Ala)-di-trans,octa-cis-undecaprenyl diphosphate = [GlcNAc-(1-&gt;4)-Mur2Ac(oyl-L-Ala-gamma-D-Glu-L-Lys-D-Ala-D-Ala)](n+1)-di-trans,octa-cis-undecaprenyl diphosphate + di-trans,octa-cis-undecaprenyl diphosphate + H(+). Its pathway is cell wall biogenesis; peptidoglycan biosynthesis. Functionally, peptidoglycan polymerase that is essential for cell division. The sequence is that of Probable peptidoglycan glycosyltransferase FtsW from Francisella salina.